Here is a 494-residue protein sequence, read N- to C-terminus: Guanosine-5'-triphosphate,3'-diphosphate pyrophosphatase (494 aa).

It belongs to the GppA/Ppx family. GppA subfamily.

The enzyme catalyses guanosine 3'-diphosphate 5'-triphosphate + H2O = guanosine 3',5'-bis(diphosphate) + phosphate + H(+). It functions in the pathway purine metabolism; ppGpp biosynthesis; ppGpp from GTP: step 2/2. Functionally, catalyzes the conversion of pppGpp to ppGpp. Guanosine pentaphosphate (pppGpp) is a cytoplasmic signaling molecule which together with ppGpp controls the 'stringent response', an adaptive process that allows bacteria to respond to amino acid starvation, resulting in the coordinated regulation of numerous cellular activities. This is Guanosine-5'-triphosphate,3'-diphosphate pyrophosphatase from Erwinia tasmaniensis (strain DSM 17950 / CFBP 7177 / CIP 109463 / NCPPB 4357 / Et1/99).